The following is a 264-amino-acid chain: Thymidylate synthase (264 aa).

Arg21 is a dUMP binding site. His51 is a binding site for (6R)-5,10-methylene-5,6,7,8-tetrahydrofolate. DUMP is bound at residue 126 to 127 (RR). Cys146 serves as the catalytic Nucleophile. DUMP contacts are provided by residues 166 to 169 (RSCD), Asn177, and 207 to 209 (HLY). A (6R)-5,10-methylene-5,6,7,8-tetrahydrofolate-binding site is contributed by Asp169. (6R)-5,10-methylene-5,6,7,8-tetrahydrofolate is bound at residue Ala263.

The protein belongs to the thymidylate synthase family. Bacterial-type ThyA subfamily. Homodimer.

The protein resides in the cytoplasm. It catalyses the reaction dUMP + (6R)-5,10-methylene-5,6,7,8-tetrahydrofolate = 7,8-dihydrofolate + dTMP. The protein operates within pyrimidine metabolism; dTTP biosynthesis. Its function is as follows. Catalyzes the reductive methylation of 2'-deoxyuridine-5'-monophosphate (dUMP) to 2'-deoxythymidine-5'-monophosphate (dTMP) while utilizing 5,10-methylenetetrahydrofolate (mTHF) as the methyl donor and reductant in the reaction, yielding dihydrofolate (DHF) as a by-product. This enzymatic reaction provides an intracellular de novo source of dTMP, an essential precursor for DNA biosynthesis. The protein is Thymidylate synthase of Shewanella baltica (strain OS155 / ATCC BAA-1091).